Reading from the N-terminus, the 215-residue chain is LysM and putative peptidoglycan-binding domain-containing protein 2 (215 aa).

The interval 1–40 (MADSSPALSLREGGPRAPRPSAPSPPPRSRSGSESEEAEL) is disordered. N-acetylalanine is present on alanine 2. 4 positions are modified to phosphoserine: serine 5, serine 24, serine 33, and serine 57. Residues 17–28 (APRPSAPSPPPR) are compositionally biased toward pro residues. Positions 71–115 (VEHRVRAGDTLQGIALKYGVTMEQIKRANKLFTNDCIFLKKTLNI) constitute a LysM domain. 2 disordered regions span residues 132 to 175 (DSPE…EEVS) and 193 to 215 (AAKK…LYHS). Residues 196 to 205 (KLKEESRDEE) are compositionally biased toward basic and acidic residues.

In Homo sapiens (Human), this protein is LysM and putative peptidoglycan-binding domain-containing protein 2 (LYSMD2).